Here is a 272-residue protein sequence, read N- to C-terminus: Putative pyruvate, phosphate dikinase regulatory protein (272 aa).

Residue 151–158 participates in ADP binding; the sequence is GISRTSKT.

Belongs to the pyruvate, phosphate/water dikinase regulatory protein family. PDRP subfamily.

It carries out the reaction N(tele)-phospho-L-histidyl/L-threonyl-[pyruvate, phosphate dikinase] + ADP = N(tele)-phospho-L-histidyl/O-phospho-L-threonyl-[pyruvate, phosphate dikinase] + AMP + H(+). It catalyses the reaction N(tele)-phospho-L-histidyl/O-phospho-L-threonyl-[pyruvate, phosphate dikinase] + phosphate + H(+) = N(tele)-phospho-L-histidyl/L-threonyl-[pyruvate, phosphate dikinase] + diphosphate. Functionally, bifunctional serine/threonine kinase and phosphorylase involved in the regulation of the pyruvate, phosphate dikinase (PPDK) by catalyzing its phosphorylation/dephosphorylation. This is Putative pyruvate, phosphate dikinase regulatory protein from Staphylococcus aureus (strain USA300).